We begin with the raw amino-acid sequence, 1012 residues long: Probable inorganic carbon transporter subunit DabA (1012 aa).

The Zn(2+) site is built by Cys489, Asp491, His679, and Cys694.

It belongs to the inorganic carbon transporter (TC 9.A.2) DabA family. In terms of assembly, forms a complex with DabB. Zn(2+) serves as cofactor.

Its subcellular location is the cell inner membrane. Its function is as follows. Part of an energy-coupled inorganic carbon pump. The sequence is that of Probable inorganic carbon transporter subunit DabA from Dechloromonas aromatica (strain RCB).